The primary structure comprises 509 residues: 2-isopropylmalate synthase (509 aa).

A Pyruvate carboxyltransferase domain is found at 5-267 (IQIFDTTLRD…QTALNLEETK (263 aa)). The Mn(2+) site is built by Asp-14, His-202, His-204, and Asn-238. The segment at 391 to 509 (KLETLQLQYV…AAENVEKVGN (119 aa)) is regulatory domain.

This sequence belongs to the alpha-IPM synthase/homocitrate synthase family. LeuA type 1 subfamily. As to quaternary structure, homodimer. It depends on Mn(2+) as a cofactor.

The protein localises to the cytoplasm. It catalyses the reaction 3-methyl-2-oxobutanoate + acetyl-CoA + H2O = (2S)-2-isopropylmalate + CoA + H(+). It functions in the pathway amino-acid biosynthesis; L-leucine biosynthesis; L-leucine from 3-methyl-2-oxobutanoate: step 1/4. In terms of biological role, catalyzes the condensation of the acetyl group of acetyl-CoA with 3-methyl-2-oxobutanoate (2-ketoisovalerate) to form 3-carboxy-3-hydroxy-4-methylpentanoate (2-isopropylmalate). This chain is 2-isopropylmalate synthase, found in Staphylococcus aureus (strain USA300).